Reading from the N-terminus, the 198-residue chain is V-type proton ATPase subunit E (198 aa).

It belongs to the V-ATPase E subunit family.

Its function is as follows. Produces ATP from ADP in the presence of a proton gradient across the membrane. In Borrelia recurrentis (strain A1), this protein is V-type proton ATPase subunit E.